Reading from the N-terminus, the 225-residue chain is NAD(P)H-quinone oxidoreductase subunit K, chloroplastic (225 aa).

Positions 43, 44, 108, and 139 each coordinate [4Fe-4S] cluster.

Belongs to the complex I 20 kDa subunit family. NDH is composed of at least 16 different subunits, 5 of which are encoded in the nucleus. It depends on [4Fe-4S] cluster as a cofactor.

It is found in the plastid. The protein resides in the chloroplast thylakoid membrane. The enzyme catalyses a plastoquinone + NADH + (n+1) H(+)(in) = a plastoquinol + NAD(+) + n H(+)(out). It catalyses the reaction a plastoquinone + NADPH + (n+1) H(+)(in) = a plastoquinol + NADP(+) + n H(+)(out). NDH shuttles electrons from NAD(P)H:plastoquinone, via FMN and iron-sulfur (Fe-S) centers, to quinones in the photosynthetic chain and possibly in a chloroplast respiratory chain. The immediate electron acceptor for the enzyme in this species is believed to be plastoquinone. Couples the redox reaction to proton translocation, and thus conserves the redox energy in a proton gradient. The protein is NAD(P)H-quinone oxidoreductase subunit K, chloroplastic of Brachypodium distachyon (Purple false brome).